Reading from the N-terminus, the 969-residue chain is Activity-dependent neuroprotective protein a (969 aa).

Residues phenylalanine 74 to histidine 97 form a C2H2-type 1 zinc finger. The segment at leucine 107–histidine 129 adopts a C2H2-type 2; atypical zinc-finger fold. 2 consecutive C2H2-type zinc fingers follow at residues tyrosine 169–histidine 192 and isoleucine 221–histidine 244. The segment at lysine 401–histidine 423 adopts a C2H2-type 5; atypical zinc-finger fold. The C2H2-type 6; atypical zinc finger occupies serine 443–histidine 464. The segment at leucine 466–histidine 489 adopts a C2H2-type 7 zinc-finger fold. The C2H2-type 8; atypical zinc finger occupies threonine 583–histidine 608. Residues tyrosine 623–histidine 647 form a C2H2-type 9; atypical zinc finger. The interval lysine 659–lysine 689 is disordered. Residues alanine 732–phenylalanine 774 constitute a DNA-binding region (homeobox). Residues aspartate 911–serine 949 form a disordered region. Over residues serine 929–serine 946 the composition is skewed to polar residues.

In terms of assembly, interacts with catenin beta-1/ctnnb1.

The protein localises to the nucleus. Its function is as follows. May be involved in transcriptional regulation. Positively modulates wnt-beta-catenin/ctnnb1 signaling. Required for embryonic neurogenesis. Required for progression through late erythroid differentiation. This chain is Activity-dependent neuroprotective protein a, found in Danio rerio (Zebrafish).